Consider the following 790-residue polypeptide: Pentatricopeptide repeat-containing protein At1g25360 (790 aa).

16 PPR repeats span residues 48–82 (RAHI…DKIA), 84–109 (TTMV…APVC), 112–146 (DTVM…GFKP), 147–182 (DNFT…GAGY), 183–217 (ITSV…ILEK), 218–248 (DERS…MDDN), 250–284 (KLVA…GIEL), 285–315 (DEFT…VLRR), 319–349 (SFHF…MPAK), 350–384 (DLVS…NILS), 385–415 (WMIM…GFEP), 416–450 (CDYA…GFDS), 451–481 (SLSA…MPCL), 482–516 (DSVS…GIRP), 517–551 (DRIT…YRIP), and 553–583 (GADH…LPFK). The interval 588–663 (IWEALLSGCR…EVACSWIEME (76 aa)) is type E motif. The segment at 664 to 694 (TQVHTFLVDDTSHPEAEAVYIYLQDLGKEMR) is type E(+) motif. The interval 695-790 (RLGYVPDTSF…NGECSCGNFW (96 aa)) is type DYW motif.

It belongs to the PPR family. PCMP-H subfamily.

In Arabidopsis thaliana (Mouse-ear cress), this protein is Pentatricopeptide repeat-containing protein At1g25360 (PCMP-H74).